The primary structure comprises 392 residues: Flagellar P-ring protein (392 aa).

Residues 1 to 38 (MKPFARRALLTAEPIRALLLAASLLAATLGLMPAEAFG) form the signal peptide.

It belongs to the FlgI family. In terms of assembly, the basal body constitutes a major portion of the flagellar organelle and consists of four rings (L,P,S, and M) mounted on a central rod.

It localises to the periplasm. Its subcellular location is the bacterial flagellum basal body. Its function is as follows. Assembles around the rod to form the L-ring and probably protects the motor/basal body from shearing forces during rotation. The polypeptide is Flagellar P-ring protein (Paramagnetospirillum magneticum (strain ATCC 700264 / AMB-1) (Magnetospirillum magneticum)).